A 232-amino-acid polypeptide reads, in one-letter code: uncharacterized protein (232 aa).

One can recognise an Autotransporter domain in the interval 1-232 (MIIKKSGGRW…LYTMGVSARF (232 aa)).

This is an uncharacterized protein from Escherichia coli (strain K12).